A 177-amino-acid polypeptide reads, in one-letter code: MEKNWYVVHTYSGYENKVKANLEKRVESMGMQDKIFRVVVPEEEETDIKNGKKKVVKKKVFPGYVLVEIVMTDDSWYVVRNTPGVTGFVGSAGSGSKPTPLLPGEAETILKRMGMDERKTDIDFELKETVKVIDGPFANFTGSIEEIDYDKSKVKVFVNMFGRETPVELEFTQIDKL.

In terms of domain architecture, KOW spans 128-156; the sequence is ETVKVIDGPFANFTGSIEEIDYDKSKVKV.

It belongs to the NusG family.

Participates in transcription elongation, termination and antitermination. Stimulates RNA polymerase pausing at U107 and U144 in the trp leader. NusG-stimulated pausing is sequence specific. Does not affect trp leader termination. This Bacillus subtilis (strain 168) protein is Transcription termination/antitermination protein NusG.